A 744-amino-acid polypeptide reads, in one-letter code: Phosphoribosylformylglycinamidine synthase subunit PurL (744 aa).

His-50 is a catalytic residue. Residues Tyr-53 and Lys-92 each coordinate ATP. Glu-94 provides a ligand contact to Mg(2+). Residues 95–98 (SHNH) and Arg-117 contribute to the substrate site. The Proton acceptor role is filled by His-96. Asp-118 contacts Mg(2+). Gln-241 serves as a coordination point for substrate. Asp-269 provides a ligand contact to Mg(2+). Position 313–315 (313–315 (ESQ)) interacts with substrate. ATP is bound by residues Asp-494 and Gly-531. Asn-532 lines the Mg(2+) pocket. Residue Ser-534 participates in substrate binding.

Belongs to the FGAMS family. In terms of assembly, monomer. Part of the FGAM synthase complex composed of 1 PurL, 1 PurQ and 2 PurS subunits.

It localises to the cytoplasm. The catalysed reaction is N(2)-formyl-N(1)-(5-phospho-beta-D-ribosyl)glycinamide + L-glutamine + ATP + H2O = 2-formamido-N(1)-(5-O-phospho-beta-D-ribosyl)acetamidine + L-glutamate + ADP + phosphate + H(+). It functions in the pathway purine metabolism; IMP biosynthesis via de novo pathway; 5-amino-1-(5-phospho-D-ribosyl)imidazole from N(2)-formyl-N(1)-(5-phospho-D-ribosyl)glycinamide: step 1/2. Functionally, part of the phosphoribosylformylglycinamidine synthase complex involved in the purines biosynthetic pathway. Catalyzes the ATP-dependent conversion of formylglycinamide ribonucleotide (FGAR) and glutamine to yield formylglycinamidine ribonucleotide (FGAM) and glutamate. The FGAM synthase complex is composed of three subunits. PurQ produces an ammonia molecule by converting glutamine to glutamate. PurL transfers the ammonia molecule to FGAR to form FGAM in an ATP-dependent manner. PurS interacts with PurQ and PurL and is thought to assist in the transfer of the ammonia molecule from PurQ to PurL. This Chelativorans sp. (strain BNC1) protein is Phosphoribosylformylglycinamidine synthase subunit PurL.